The sequence spans 563 residues: Minor fimbrium subunit Mfa1 (563 aa).

The signal sequence occupies residues 1–19 (MKLNKMFLVGALLSLGFAS). Cys20 is lipidated: N-palmitoyl cysteine. Cys20 carries the S-diacylglycerol cysteine lipid modification. Positions 20–49 (CSKEGNGPDPDNAAKSYMSMTLSMPMGSAR) are excised as a propeptide. Residues 504 to 543 (LVPDPDPSNPENPNNPDPNPDEPGTPVPTDPENPLPDQDT) are disordered. Positions 505–537 (VPDPDPSNPENPNNPDPNPDEPGTPVPTDPENP) are enriched in pro residues.

This sequence belongs to the bacteroidetes fimbrillin superfamily. In terms of assembly, structural component of the fimbrial stalk. Minor fimbriae are composed of a structural subunit, most often Mfa1, and the accessory subunits Mfa3, Mfa4 and Mfa5. Mfa1 interacts with Mfa2; this anchors the fimbrium in the membrane. Fimbrium assembly occurs by linear, head-to-tail oligomerization of fimbrial subunits. This is mediated via insertion of a C-terminal beta-strand from one subunit into a groove in the N-terminal domain of the following subunit. Interacts with S.gordonii ssp5.

It localises to the fimbrium. The protein resides in the cell outer membrane. Its function is as follows. Structural subunit of the minor fimbriae. These filamentous pili are attached to the cell surface; they mediate biofilm formation, adhesion onto host cells and onto other bacteria that are part of the oral microbiome. They play an important role in invasion of periodontal tissues and are recognized as major virulence factors. Mfa1 orthologs from different strains have highly divergent sequences, and this correlates with pathogenicity. The polypeptide is Minor fimbrium subunit Mfa1 (Porphyromonas gingivalis (strain ATCC 33277 / DSM 20709 / CIP 103683 / JCM 12257 / NCTC 11834 / 2561)).